Here is a 312-residue protein sequence, read N- to C-terminus: Retron Ec83 reverse transcriptase (312 aa).

The Reverse transcriptase domain occupies 14-239 (PDFDVLLKSR…HNRHVTGVTL (226 aa)). Mg(2+) is bound by residues aspartate 97, aspartate 185, and aspartate 186.

The protein belongs to the bacterial reverse transcriptase family.

It catalyses the reaction DNA(n) + a 2'-deoxyribonucleoside 5'-triphosphate = DNA(n+1) + diphosphate. Reverse transcriptase (RT) component of antiviral defense system retron Ec83, composed of a non-coding RNA (ncRNA), this reverse transcriptase (RT), a probable ATPase and a putative HNH endonuclease. Expression of retron Ec83 confers protection against bacteriophages T2, T4 and T6. At multiplicity of infection (MOI) of 0.02 cultures slow growth when infected with T4 but do not collapse, at MOI 2 cultures enter growth stasis. Responsible for synthesis of msDNA-Ec83 (a linear ssDNA with a 5'-terminal phosphate residue). Unlike most known msDNAs the mature product from the original strain does not have an RNA component. When the ncRNA plus RT are expressed in strain K12 / JM109 only linear DNA is seen in stationary phase cells, but logarithmic phase cells have both a linear and branched msDNA (a branched molecule with RNA linked by a 2',5'-phosphodiester bond to ssDNA, a 'classic' retron). The branched msDNA is probably the precursor for the mature linear msDNA, the precursor is cleaved endonucleolytically by ExoVII (xseA-xseB) leaving the observed mature 5'-phosphate ssDNA terminus. The retron transcript serves as primer (from a conserved internal G residue) and template for the reaction, and codes for the RT. Overexpression of the ncRNA and RT, which leads to increased levels of msDNA, is mutagenic in vivo. This may be due to a mismatch in the msDNA stem which binds and sequesters MutS and/or MutL. The protein is Retron Ec83 reverse transcriptase of Escherichia coli.